Reading from the N-terminus, the 105-residue chain is Large ribosomal subunit protein uL24 (105 aa).

The protein belongs to the universal ribosomal protein uL24 family. Part of the 50S ribosomal subunit.

Its function is as follows. One of two assembly initiator proteins, it binds directly to the 5'-end of the 23S rRNA, where it nucleates assembly of the 50S subunit. One of the proteins that surrounds the polypeptide exit tunnel on the outside of the subunit. The sequence is that of Large ribosomal subunit protein uL24 from Acinetobacter baumannii (strain AB307-0294).